A 308-amino-acid chain; its full sequence is Cysteine synthase (308 aa).

Lys45 is subject to N6-(pyridoxal phosphate)lysine. Residues Asn75, 179 to 183, and Ser267 each bind pyridoxal 5'-phosphate; that span reads GTGGT.

This sequence belongs to the cysteine synthase/cystathionine beta-synthase family. As to quaternary structure, homodimer. Forms CymR(2):CysK(2) or CymR(4):CysK(4) complexes in the absence of O-acetylserine. Requires pyridoxal 5'-phosphate as cofactor.

The enzyme catalyses O-acetyl-L-serine + hydrogen sulfide = L-cysteine + acetate. It participates in amino-acid biosynthesis; L-cysteine biosynthesis; L-cysteine from L-serine: step 2/2. In terms of biological role, catalyzes the conversion of O-acetylserine to cysteine. Also acts as a sensor of cysteine availability in the signal transduction pathway modulating CymR activity. When cysteine is present, the pool of O-acetylserine (OAS) is low, which leads to the formation of a CymR-CysK complex and transcriptional repression of the CymR regulon occurs. In the absence of cysteine, the OAS pool is high and the CymR-CysK complex is mostly dissociated, leading to a faster dissociation of CymR from its DNA targets and the lifting of CymR-dependent repression. The sequence is that of Cysteine synthase (cysK) from Bacillus subtilis (strain 168).